Reading from the N-terminus, the 464-residue chain is Leucine-rich repeat-containing protein 34 (464 aa).

A disordered region spans residues 1 to 48 (MAAQPPRPVGERSMGSSREAARAPARSPAWASTQASTPGAALAVQRES). Over residues 16–32 (SSREAARAPARSPAWAS) the composition is skewed to low complexity. 2 LRR repeats span residues 295 to 315 (SLRYLDVSCNKITHDGMVYLA) and 323 to 345 (TLEVIDLSFNRIENAGANYLSET).

In terms of assembly, interacts with NPM1 and NCL.

It localises to the nucleus. The protein localises to the nucleolus. The protein resides in the cytoplasm. Highly expressed in stem cells where it may be involved in regulation of pluripotency. In embryonic stem cells (ESCs), important for normal expression of the pluripotency regulators POU5F1/OCT4 and KLF4. Also important for expression of the ectodermal marker gene NES and the endodermal marker gene GATA4. Promotes stem cell proliferation in vitro. The protein is Leucine-rich repeat-containing protein 34 (LRRC34) of Homo sapiens (Human).